A 233-amino-acid chain; its full sequence is Small ribosomal subunit protein uS2c (233 aa).

It belongs to the universal ribosomal protein uS2 family.

It localises to the plastid. It is found in the chloroplast. This is Small ribosomal subunit protein uS2c (rps2) from Staurastrum punctulatum (Green alga).